Reading from the N-terminus, the 455-residue chain is Glutamate-1-semialdehyde 2,1-aminomutase (455 aa).

Position 286 is an N6-(pyridoxal phosphate)lysine (lysine 286).

It belongs to the class-III pyridoxal-phosphate-dependent aminotransferase family. HemL subfamily. As to quaternary structure, homodimer. The cofactor is pyridoxal 5'-phosphate.

The protein localises to the cytoplasm. The catalysed reaction is (S)-4-amino-5-oxopentanoate = 5-aminolevulinate. It functions in the pathway porphyrin-containing compound metabolism; protoporphyrin-IX biosynthesis; 5-aminolevulinate from L-glutamyl-tRNA(Glu): step 2/2. The sequence is that of Glutamate-1-semialdehyde 2,1-aminomutase from Clavibacter michiganensis subsp. michiganensis (strain NCPPB 382).